A 358-amino-acid polypeptide reads, in one-letter code: Endoplasmic reticulum junction formation protein lunapark-B (358 aa).

Over 1–45 (MGAIISRWKTKLTTVEQLENIDKEIKQLEEFRAKNQRLQKLWVGR) the chain is Cytoplasmic. Positions 9-41 (KTKLTTVEQLENIDKEIKQLEEFRAKNQRLQKL) form a coiled coil. A helical transmembrane segment spans residues 46–66 (LLLYSSALYLLISLFVYLLYL). The Lumenal portion of the chain corresponds to 67–69 (PEQ). A helical membrane pass occupies residues 70–90 (WLLRLAMALPFFIYPVLVWFI). Topologically, residues 91-358 (RRFLIFLFSK…SRGMDKHGRA (268 aa)) are cytoplasmic. Residues 99–128 (SKRSERNNDKLEDLKATKKKILEEVMETET) adopt a coiled-coil conformation. Residues 275 to 300 (CQQCFSHNGMALKEEFEYLAFRCAYC) form a C4-type; plays a role in ER morphology zinc finger. Positions 320–358 (NFEKRLRAESSTPGPAPHSATDTEESAPPSRGMDKHGRA) are disordered.

Belongs to the lunapark family. Homodimer; homodimerization requires the C4-type zinc finger motif and decreases during mitosis in a phosphorylation-dependent manner. Post-translationally, phosphorylated. Phosphorylation occurs during interphase. Phosphorylation also occurs during mitosis; these phosphorylations reduce both its homodimerization and the ER three-way tubular junction formation.

The protein resides in the endoplasmic reticulum membrane. Its function is as follows. Endoplasmic reticulum (ER)-shaping membrane protein that plays a role in determining ER morphology. Involved in the stabilization of nascent three-way ER tubular junctions within the ER network. May also play a role as a curvature-stabilizing protein within three-way ER tubular junction network. This chain is Endoplasmic reticulum junction formation protein lunapark-B (lnpkb), found in Takifugu rubripes (Japanese pufferfish).